We begin with the raw amino-acid sequence, 384 residues long: Somatostatin receptor type 4 (384 aa).

The interval 1 to 34 (MNTPATLPLGGEDTTWTPGINASWAPDEEEDAVR) is disordered. Residues 1 to 41 (MNTPATLPLGGEDTTWTPGINASWAPDEEEDAVRSDGTGTA) are Extracellular-facing. N-linked (GlcNAc...) asparagine glycosylation is present at asparagine 21. A helical membrane pass occupies residues 42 to 69 (GMVTIQCIYALVCLVGLVGNALVIFVIL). Residues 70–79 (RYAKMKTATN) are Cytoplasmic-facing. The chain crosses the membrane as a helical span at residues 80–105 (IYLLNLAVADELFMLSVPFVASAAAL). Over 106–116 (RHWPFGAVLCR) the chain is Extracellular. A disulfide bridge links cysteine 115 with cysteine 194. The chain crosses the membrane as a helical span at residues 117 to 138 (AVLSVDGLNMFTSVFCLTVLSV). Residues 139–160 (DRYVAVVHPLRAATYRRPSVAK) lie on the Cytoplasmic side of the membrane. Residues 161–181 (LINLGVWLASLLVTLPIAVFA) form a helical membrane-spanning segment. Residues 182-203 (DTRPARGGEAVACNLHWPHPAW) lie on the Extracellular side of the membrane. Residues 204 to 228 (SAVFVIYTFLLGFLLPVLAIGLCYL) traverse the membrane as a helical segment. Over 229–254 (LIVGKMRAVALRAGWQQRRRSEKKIT) the chain is Cytoplasmic. A helical transmembrane segment spans residues 255–280 (RLVLMVVTVFVLCWMPFYVVQLLNLF). Residues 281 to 287 (VTSLDAT) lie on the Extracellular side of the membrane. Residues 288-311 (VNHVSLILSYANSCANPILYGFLS) traverse the membrane as a helical segment. At 312–384 (DNFRRSFQRV…RVPFTKTTTF (73 aa)) the chain is on the cytoplasmic side. Cysteine 323 carries S-palmitoyl cysteine lipidation.

The protein belongs to the G-protein coupled receptor 1 family. In terms of tissue distribution, brain, lung, heart and islets. Moderate levels in the hippocampus, cortex and olfactory bulb.

It localises to the cell membrane. In terms of biological role, receptor for somatostatin-14. The activity of this receptor is mediated by G proteins which inhibits adenylyl cyclase. It is functionally coupled not only to inhibition of adenylate cyclase, but also to activation of both arachidonate release and mitogen-activated protein (MAP) kinase cascade. This is Somatostatin receptor type 4 (Sstr4) from Rattus norvegicus (Rat).